The primary structure comprises 149 residues: Large ribosomal subunit protein uL22c (149 aa).

The protein belongs to the universal ribosomal protein uL22 family. Part of the 50S ribosomal subunit.

It is found in the plastid. The protein localises to the chloroplast. Its function is as follows. This protein binds specifically to 23S rRNA. In terms of biological role, the globular domain of the protein is located near the polypeptide exit tunnel on the outside of the subunit, while an extended beta-hairpin is found that lines the wall of the exit tunnel in the center of the 70S ribosome. This is Large ribosomal subunit protein uL22c (rpl22) from Brachypodium distachyon (Purple false brome).